A 527-amino-acid chain; its full sequence is Eukaryotic translation initiation factor 3 subunit D (527 aa).

Residues 100–136 form a disordered region; that stretch reads QQNKRGGSNAGGRGGRGGMRGGRFGSNNKYWNDRRQR. Over residues 107 to 123 the composition is skewed to gly residues; the sequence is SNAGGRGGRGGMRGGRF. An RNA gate region spans residues 264–277; it reads SEHLTVNENLTAHH. The segment at 503-527 is disordered; the sequence is DQIEEETQEEEEEEQSKGWVEESRE. Positions 504-516 are enriched in acidic residues; the sequence is QIEEETQEEEEEE. Positions 517–527 are enriched in basic and acidic residues; the sequence is QSKGWVEESRE.

Belongs to the eIF-3 subunit D family. As to quaternary structure, component of the eukaryotic translation initiation factor 3 (eIF-3) complex.

The protein localises to the cytoplasm. Functionally, mRNA cap-binding component of the eukaryotic translation initiation factor 3 (eIF-3) complex, which is involved in protein synthesis of a specialized repertoire of mRNAs and, together with other initiation factors, stimulates binding of mRNA and methionyl-tRNAi to the 40S ribosome. The eIF-3 complex specifically targets and initiates translation of a subset of mRNAs involved in cell proliferation. In the eIF-3 complex, eif3d specifically recognizes and binds the 7-methylguanosine cap of a subset of mRNAs. The chain is Eukaryotic translation initiation factor 3 subunit D (eif3d) from Dictyostelium discoideum (Social amoeba).